Consider the following 514-residue polypeptide: Peptide chain release factor 3 (514 aa).

The region spanning 8–268 (KKRRTFAIIS…IFLKFAPEPH (261 aa)) is the tr-type G domain. GTP-binding positions include 17-24 (SHPDAGKT), 85-89 (DTPGH), and 139-142 (NKLD).

It belongs to the TRAFAC class translation factor GTPase superfamily. Classic translation factor GTPase family. PrfC subfamily.

It localises to the cytoplasm. Increases the formation of ribosomal termination complexes and stimulates activities of RF-1 and RF-2. It binds guanine nucleotides and has strong preference for UGA stop codons. It may interact directly with the ribosome. The stimulation of RF-1 and RF-2 is significantly reduced by GTP and GDP, but not by GMP. The chain is Peptide chain release factor 3 from Streptococcus pneumoniae (strain 70585).